We begin with the raw amino-acid sequence, 382 residues long: V-type proton ATPase subunit C 1 (382 aa).

Thr-2 bears the N-acetylthreonine mark.

The protein belongs to the V-ATPase C subunit family. As to quaternary structure, V-ATPase is a heteromultimeric enzyme made up of two complexes: the ATP-hydrolytic V1 complex and the proton translocation V0 complex. The V1 complex consists of three catalytic AB heterodimers that form a heterohexamer, three peripheral stalks each consisting of EG heterodimers, one central rotor including subunits D and F, and the regulatory subunits C and H. The proton translocation complex V0 consists of the proton transport subunit a, a ring of proteolipid subunits c9c'', rotary subunit d, subunits e and f, and the accessory subunits ATP6AP1/Ac45 and ATP6AP2/PRR. In terms of tissue distribution, expressed in brain (at protein level).

The protein localises to the cytoplasmic vesicle. It localises to the secretory vesicle. The protein resides in the synaptic vesicle membrane. It is found in the clathrin-coated vesicle membrane. Its function is as follows. Subunit of the V1 complex of vacuolar(H+)-ATPase (V-ATPase), a multisubunit enzyme composed of a peripheral complex (V1) that hydrolyzes ATP and a membrane integral complex (V0) that translocates protons. V-ATPase is responsible for acidifying and maintaining the pH of intracellular compartments and in some cell types, is targeted to the plasma membrane, where it is responsible for acidifying the extracellular environment. Subunit C is necessary for the assembly of the catalytic sector of the enzyme and is likely to have a specific function in its catalytic activity. This chain is V-type proton ATPase subunit C 1 (ATP6V1C1), found in Bos taurus (Bovine).